The sequence spans 217 residues: Thymidylate kinase (217 aa).

16-23 lines the ATP pocket; the sequence is GIDGAGKT.

This sequence belongs to the thymidylate kinase family.

The enzyme catalyses dTMP + ATP = dTDP + ADP. Functionally, phosphorylation of dTMP to form dTDP in both de novo and salvage pathways of dTTP synthesis. This chain is Thymidylate kinase, found in Xylella fastidiosa (strain M12).